Reading from the N-terminus, the 131-residue chain is Global transcriptional regulator Spx (131 aa).

The cysteines at positions 10 and 13 are disulfide-linked.

The protein belongs to the ArsC family. Spx subfamily. Interacts with the C-terminal domain of the alpha subunit of the RNAP.

The protein resides in the cytoplasm. In terms of biological role, global transcriptional regulator that plays a key role in stress response and exerts either positive or negative regulation of genes. Acts by interacting with the C-terminal domain of the alpha subunit of the RNA polymerase (RNAP). This interaction can enhance binding of RNAP to the promoter region of target genes and stimulate their transcription, or block interaction of RNAP with activator. This Staphylococcus haemolyticus (strain JCSC1435) protein is Global transcriptional regulator Spx.